The primary structure comprises 104 residues: Co-chaperonin GroES 5 (104 aa).

Belongs to the GroES chaperonin family. In terms of assembly, heptamer of 7 subunits arranged in a ring. Interacts with the chaperonin GroEL.

It localises to the cytoplasm. Functionally, together with the chaperonin GroEL, plays an essential role in assisting protein folding. The GroEL-GroES system forms a nano-cage that allows encapsulation of the non-native substrate proteins and provides a physical environment optimized to promote and accelerate protein folding. GroES binds to the apical surface of the GroEL ring, thereby capping the opening of the GroEL channel. The polypeptide is Co-chaperonin GroES 5 (Rhizobium meliloti (strain 1021) (Ensifer meliloti)).